We begin with the raw amino-acid sequence, 502 residues long: ATP synthase subunit alpha (502 aa).

169-176 serves as a coordination point for ATP; the sequence is GDRQTGKT.

The protein belongs to the ATPase alpha/beta chains family. F-type ATPases have 2 components, CF(1) - the catalytic core - and CF(0) - the membrane proton channel. CF(1) has five subunits: alpha(3), beta(3), gamma(1), delta(1), epsilon(1). CF(0) has three main subunits: a(1), b(2) and c(9-12). The alpha and beta chains form an alternating ring which encloses part of the gamma chain. CF(1) is attached to CF(0) by a central stalk formed by the gamma and epsilon chains, while a peripheral stalk is formed by the delta and b chains.

It is found in the cell membrane. The enzyme catalyses ATP + H2O + 4 H(+)(in) = ADP + phosphate + 5 H(+)(out). In terms of biological role, produces ATP from ADP in the presence of a proton gradient across the membrane. The alpha chain is a regulatory subunit. This Streptococcus pyogenes serotype M18 (strain MGAS8232) protein is ATP synthase subunit alpha.